We begin with the raw amino-acid sequence, 328 residues long: Glycerol-3-phosphate dehydrogenase [NAD(P)+] (328 aa).

NADPH-binding residues include Trp-15, Arg-35, Arg-36, and Lys-105. Lys-105 and Gly-131 together coordinate sn-glycerol 3-phosphate. An NADPH-binding site is contributed by Ala-135. 5 residues coordinate sn-glycerol 3-phosphate: Lys-186, Asp-239, Ser-249, Arg-250, and Asn-251. Lys-186 (proton acceptor) is an active-site residue. Arg-250 contacts NADPH. Residues Val-270 and Glu-272 each contribute to the NADPH site.

This sequence belongs to the NAD-dependent glycerol-3-phosphate dehydrogenase family.

The protein resides in the cytoplasm. It carries out the reaction sn-glycerol 3-phosphate + NAD(+) = dihydroxyacetone phosphate + NADH + H(+). The enzyme catalyses sn-glycerol 3-phosphate + NADP(+) = dihydroxyacetone phosphate + NADPH + H(+). Its pathway is membrane lipid metabolism; glycerophospholipid metabolism. Functionally, catalyzes the reduction of the glycolytic intermediate dihydroxyacetone phosphate (DHAP) to sn-glycerol 3-phosphate (G3P), the key precursor for phospholipid synthesis. In Deinococcus radiodurans (strain ATCC 13939 / DSM 20539 / JCM 16871 / CCUG 27074 / LMG 4051 / NBRC 15346 / NCIMB 9279 / VKM B-1422 / R1), this protein is Glycerol-3-phosphate dehydrogenase [NAD(P)+].